A 583-amino-acid polypeptide reads, in one-letter code: Phosphoglucomutase, cytoplasmic (583 aa).

The segment at 1–20 (MATFKVSRVETKPYDGQKPG) is disordered. Residues Arg-25 and Ser-124 each coordinate alpha-D-glucose 1,6-bisphosphate. Catalysis depends on Ser-124, which acts as the Phosphoserine intermediate. Mg(2+) is bound by residues Ser-124, Asp-300, Asp-302, and Asp-304. Ser-124 is subject to Phosphoserine. Asp-304, Arg-305, Thr-368, Glu-387, Ser-389, and Lys-400 together coordinate alpha-D-glucose 1,6-bisphosphate.

This sequence belongs to the phosphohexose mutase family. In terms of assembly, monomer. Requires Mg(2+) as cofactor.

Its subcellular location is the cytoplasm. The catalysed reaction is alpha-D-glucose 1-phosphate = alpha-D-glucose 6-phosphate. The enzyme catalyses O-phospho-L-seryl-[protein] + alpha-D-glucose 1-phosphate = alpha-D-glucose 1,6-bisphosphate + L-seryl-[protein]. It catalyses the reaction alpha-D-glucose 1,6-bisphosphate + L-seryl-[protein] = O-phospho-L-seryl-[protein] + alpha-D-glucose 6-phosphate. Catalyzes the reversible isomerization of alpha-D-glucose 1-phosphate to alpha-D-glucose 6-phosphate. The mechanism proceeds via the intermediate compound alpha-D-glucose 1,6-bisphosphate. This enzyme participates in both the breakdown and synthesis of glucose. This is Phosphoglucomutase, cytoplasmic (PGM1) from Mesembryanthemum crystallinum (Common ice plant).